The chain runs to 119 residues: Large ribosomal subunit protein bL19 (119 aa).

Belongs to the bacterial ribosomal protein bL19 family.

In terms of biological role, this protein is located at the 30S-50S ribosomal subunit interface and may play a role in the structure and function of the aminoacyl-tRNA binding site. The protein is Large ribosomal subunit protein bL19 of Pseudarthrobacter chlorophenolicus (strain ATCC 700700 / DSM 12829 / CIP 107037 / JCM 12360 / KCTC 9906 / NCIMB 13794 / A6) (Arthrobacter chlorophenolicus).